We begin with the raw amino-acid sequence, 190 residues long: ATP synthase subunit b (190 aa).

A helical membrane pass occupies residues 4 to 24 (ILAPVLSLVLIAGVASPALAA).

Belongs to the ATPase B chain family. F-type ATPases have 2 components, F(1) - the catalytic core - and F(0) - the membrane proton channel. F(1) has five subunits: alpha(3), beta(3), gamma(1), delta(1), epsilon(1). F(0) has three main subunits: a(1), b(2) and c(10-14). The alpha and beta chains form an alternating ring which encloses part of the gamma chain. F(1) is attached to F(0) by a central stalk formed by the gamma and epsilon chains, while a peripheral stalk is formed by the delta and b chains.

The protein resides in the cell inner membrane. Functionally, f(1)F(0) ATP synthase produces ATP from ADP in the presence of a proton or sodium gradient. F-type ATPases consist of two structural domains, F(1) containing the extramembraneous catalytic core and F(0) containing the membrane proton channel, linked together by a central stalk and a peripheral stalk. During catalysis, ATP synthesis in the catalytic domain of F(1) is coupled via a rotary mechanism of the central stalk subunits to proton translocation. Its function is as follows. Component of the F(0) channel, it forms part of the peripheral stalk, linking F(1) to F(0). This chain is ATP synthase subunit b, found in Ruegeria pomeroyi (strain ATCC 700808 / DSM 15171 / DSS-3) (Silicibacter pomeroyi).